The chain runs to 1410 residues: MKMLDLYGYTSIAQSFDKICISIASPESIRAMSYGEIKDISTTNYRTFKVEKGGLFCPKIFGPVNDDECLCGKYRKKRYRGVVCEKCGVEVTSSKVRRERMGHIELVSPVAHVWFLKSLPSRIGALLDMPLKLIENILYSGDFVVIDPIATPLSKGEVISESAYNQAKDNYGEDSFLALTGAEAIRELLVRLDLHAINANLRVELESTTSEMKRKKIVKRLRIVENFINSGNKPEWMILTVIPILPPDLRPLVSLENGRPAVSDLNHHYRTIINRNNRLGKLLKLNPPAIMIRNEKRMLQEAVDALFDSTRRSYVSNKAGSVGYKKSLSDMLKGKQGRFRQNLLGKRVDYSGRSVIVVGPNLKLHQCGLPKKMALELFKPFICSKLKMYGIVPTVKLANKMIQNEKPEVWDILDEVIHEHPILLNRAPTLHRLGIQAFDPVLIEGKAIQLHPLVCSAFNADFDGDQMAVHIPLSLEAQLEARILMMSTNNILSPSNGKPIIVPSKDIVLGIYYLTLQDQVQSEDEILFFGDFSHVEYALHNKDVHLCSQIKYRMTYCNYDTSDGKPSYYSKIIETTPGRLILWQIFPQHKNLTFDLINQVLTVKEITSIVDLVYRSCGQSETVEFSDKLMSLGFKYASQSGISFGCKDMIIPDTKTMHVDNASEKIKEFAVQYQDGLITRSERYNKVIDEWSKCTDLIAKDMMKAISVYDVESKLNSIYMMAHSGARGSASQMKQLAGMRGLMAKPSGEIIETPIISNFREGLNVFEYFNSTHGARKGLADTALKTANSGYLTRRLVDVAQDCIVVEYDCKTHNGFAIRSVVEGGTVVETLDNIILGRVAAVDVYNPITEELLVKAGELIDEAKVEKIKIAGLDAVKVRSPLTCEAKKGICALCYGRDLAIGDVVSIGEAVGVIAAQSVGEPGTQLTMRTFHVGGTAMRGVETSNLIALLDAKVKLVNSNIVEDKHGNKIVMSRSCEVVLLDSVGNEKMRHNVPYGARLYVDDGQLVKITEKIAEWDPYTMPIITEKTGIIKYMDLIDGVSINEVLDESTGISNRVVVDWKLHLQGANLRPRLVLIDDNDNIITLSNGLEANYFIPIGAVLNVQDGQKVHAGDVITRIPRDSIKTRDITGGLPRVIELFEARRPKEHAIVSDIDGYVEFGKDYYRSKRRIFIKPVSDTLSPVEYLVPKGKHTIVNEGDFVHKGDLLMDGDPDPHDILRVLGVEALANYMISEIQQVYRLQGVRIDNKHIEIILRQMLQKVEIFEPGDTMYLVGENIDMEEVIKTNDNMVKMGKSPAKYAPILQGITRASLDTNSFVSAASFQETTKVLTEAAFSGKEDSLYGLKENVIVGRLIPAGTGFLMNKIKKLSLLNKEDYSMYYNNEYQDSALLQNDNNAFNQELHKDTGNIVDY.

Zn(2+) contacts are provided by Cys69, Cys71, Cys84, and Cys87. The Mg(2+) site is built by Asp461, Asp463, and Asp465. Zn(2+) is bound by residues Cys810, Cys884, Cys891, and Cys894.

This sequence belongs to the RNA polymerase beta' chain family. The RNAP catalytic core consists of 2 alpha, 1 beta, 1 beta' and 1 omega subunit. When a sigma factor is associated with the core the holoenzyme is formed, which can initiate transcription. It depends on Mg(2+) as a cofactor. The cofactor is Zn(2+).

The catalysed reaction is RNA(n) + a ribonucleoside 5'-triphosphate = RNA(n+1) + diphosphate. Functionally, DNA-dependent RNA polymerase catalyzes the transcription of DNA into RNA using the four ribonucleoside triphosphates as substrates. This chain is DNA-directed RNA polymerase subunit beta', found in Ehrlichia chaffeensis (strain ATCC CRL-10679 / Arkansas).